A 219-amino-acid polypeptide reads, in one-letter code: Redox-sensing transcriptional repressor Rex (219 aa).

The segment at residues 17-56 is a DNA-binding region (H-T-H motif); it reads LYYRIFKRFHRENIVKTSSKQIAEAIGIDPATVRRDFSYF. 91-96 is an NAD(+) binding site; it reads GVGNIG.

This sequence belongs to the transcriptional regulatory Rex family. As to quaternary structure, homodimer.

It is found in the cytoplasm. Functionally, modulates transcription in response to changes in cellular NADH/NAD(+) redox state. The protein is Redox-sensing transcriptional repressor Rex of Streptococcus thermophilus (strain ATCC BAA-491 / LMD-9).